The sequence spans 766 residues: Pentatricopeptide repeat-containing protein At3g61520, mitochondrial (766 aa).

Residues 1–30 (MSIMLSISRRRNSYILLNHSRFLRRFSYDV) constitute a mitochondrion transit peptide. PPR repeat units lie at residues 151–181 (TVVA…LDSN), 184–218 (NSQV…ESVF), 221–257 (NRIT…GVSP), 258–292 (NSVW…KTPL), 293–327 (EAPP…KIRP), 328–358 (DVVT…MRGK), 369–404 (DSIH…RCAP), 405–439 (NAVT…EIKP), 440–474 (NVVT…GVKG), 475–509 (NVVT…GCSP), 510–544 (DAKI…GFSL), 545–579 (DLLA…GKKP), 580–614 (DSIT…GLDP), 615–650 (TVTT…KVNP), 651–685 (NTVI…MVRP), and 686–720 (NVET…SCEP).

This sequence belongs to the PPR family. P subfamily.

The protein localises to the mitochondrion. The chain is Pentatricopeptide repeat-containing protein At3g61520, mitochondrial from Arabidopsis thaliana (Mouse-ear cress).